A 61-amino-acid polypeptide reads, in one-letter code: Large ribosomal subunit protein bL32 (61 aa).

Basic residues predominate over residues 1-16 (MAVPKRKTSPSKRGMR). Residues 1 to 41 (MAVPKRKTSPSKRGMRRSADALKASTYVEDKNSGELRRPHH) are disordered. A compositionally biased stretch (basic and acidic residues) spans 28 to 41 (VEDKNSGELRRPHH).

The protein belongs to the bacterial ribosomal protein bL32 family.

The polypeptide is Large ribosomal subunit protein bL32 (Rhizobium rhizogenes (strain K84 / ATCC BAA-868) (Agrobacterium radiobacter)).